Here is a 338-residue protein sequence, read N- to C-terminus: D-alanine--D-alanine ligase (338 aa).

Residues 120-324 (KRVMLAEGLP…YEDLCIEVLK (205 aa)) form the ATP-grasp domain. 150-205 (PDKLGLPLIVKPAREGSSIGLTKVTERAGMADAVAQAEKLDADILCEQFISGDEVT) is a binding site for ATP. Mg(2+)-binding residues include Asp277, Glu291, and Asn293.

Belongs to the D-alanine--D-alanine ligase family. Mg(2+) serves as cofactor. Requires Mn(2+) as cofactor.

It localises to the cytoplasm. It carries out the reaction 2 D-alanine + ATP = D-alanyl-D-alanine + ADP + phosphate + H(+). The protein operates within cell wall biogenesis; peptidoglycan biosynthesis. Cell wall formation. The protein is D-alanine--D-alanine ligase of Polaromonas sp. (strain JS666 / ATCC BAA-500).